A 276-amino-acid chain; its full sequence is Rhomboid protease GlpG (276 aa).

A run of 6 helical transmembrane segments spans residues 96–116 (VTWLIMIACILVFVVMSIVGA), 142–162 (AFMHFSLMHILFNLLWWWYIG), 169–189 (LGSGKLIVITVISALLSGYVQ), 192–212 (FSGPWFGGLSGVVYALMGYAW), 229–249 (LIAFALIWIVAGWFDVFGMSM), and 250–270 (ANGAHIAGLAVGLAMAFADTV). Serine 201 functions as the Nucleophile in the catalytic mechanism. Residue histidine 254 is part of the active site.

This sequence belongs to the peptidase S54 family.

Its subcellular location is the cell inner membrane. It catalyses the reaction Cleaves type-1 transmembrane domains using a catalytic dyad composed of serine and histidine that are contributed by different transmembrane domains.. Functionally, rhomboid-type serine protease that catalyzes intramembrane proteolysis. This Citrobacter koseri (strain ATCC BAA-895 / CDC 4225-83 / SGSC4696) protein is Rhomboid protease GlpG.